A 334-amino-acid polypeptide reads, in one-letter code: GTPase Obg (334 aa).

The Obg domain occupies 1–159 (MKFVDSASVR…REIGLELSVM (159 aa)). Residues 160 to 332 (ADIGLLGIPN…LVAGLFKLVL (173 aa)) form the OBG-type G domain. GTP-binding positions include 166–173 (GIPNAGKS), 191–195 (FTTLH), 212–215 (DIPG), 282–285 (NKID), and 313–315 (SAL). Mg(2+)-binding residues include serine 173 and threonine 193.

The protein belongs to the TRAFAC class OBG-HflX-like GTPase superfamily. OBG GTPase family. As to quaternary structure, monomer. It depends on Mg(2+) as a cofactor.

The protein localises to the cytoplasm. An essential GTPase which binds GTP, GDP and possibly (p)ppGpp with moderate affinity, with high nucleotide exchange rates and a fairly low GTP hydrolysis rate. Plays a role in control of the cell cycle, stress response, ribosome biogenesis and in those bacteria that undergo differentiation, in morphogenesis control. This Vesicomyosocius okutanii subsp. Calyptogena okutanii (strain HA) protein is GTPase Obg.